We begin with the raw amino-acid sequence, 227 residues long: Small ribosomal subunit protein uS3 (227 aa).

The 69-residue stretch at 39–107 folds into the KH type-2 domain; the sequence is VREFLDKRLV…PVHINIEEVR (69 aa).

This sequence belongs to the universal ribosomal protein uS3 family. As to quaternary structure, part of the 30S ribosomal subunit. Forms a tight complex with proteins S10 and S14.

Its function is as follows. Binds the lower part of the 30S subunit head. Binds mRNA in the 70S ribosome, positioning it for translation. This Marinobacter nauticus (strain ATCC 700491 / DSM 11845 / VT8) (Marinobacter aquaeolei) protein is Small ribosomal subunit protein uS3.